Here is a 260-residue protein sequence, read N- to C-terminus: Proteasome subunit alpha (260 aa).

The segment at 231-260 is disordered; sequence LLPEDFSPGQTEGGGDPAPESGDSKDAKDN.

Belongs to the peptidase T1A family. As to quaternary structure, the 20S proteasome core is composed of 14 alpha and 14 beta subunits that assemble into four stacked heptameric rings, resulting in a barrel-shaped structure. The two inner rings, each composed of seven catalytic beta subunits, are sandwiched by two outer rings, each composed of seven alpha subunits. The catalytic chamber with the active sites is on the inside of the barrel. Has a gated structure, the ends of the cylinder being occluded by the N-termini of the alpha-subunits. Is capped by the proteasome-associated ATPase, ARC.

Its subcellular location is the cytoplasm. It functions in the pathway protein degradation; proteasomal Pup-dependent pathway. With respect to regulation, the formation of the proteasomal ATPase ARC-20S proteasome complex, likely via the docking of the C-termini of ARC into the intersubunit pockets in the alpha-rings, may trigger opening of the gate for substrate entry. Interconversion between the open-gate and close-gate conformations leads to a dynamic regulation of the 20S proteasome proteolysis activity. Functionally, component of the proteasome core, a large protease complex with broad specificity involved in protein degradation. This is Proteasome subunit alpha from Mycobacteroides abscessus (strain ATCC 19977 / DSM 44196 / CCUG 20993 / CIP 104536 / JCM 13569 / NCTC 13031 / TMC 1543 / L948) (Mycobacterium abscessus).